The chain runs to 376 residues: Histidinol-phosphate aminotransferase (376 aa).

Lys-230 bears the N6-(pyridoxal phosphate)lysine mark.

This sequence belongs to the class-II pyridoxal-phosphate-dependent aminotransferase family. Histidinol-phosphate aminotransferase subfamily. Homodimer. Pyridoxal 5'-phosphate serves as cofactor.

It carries out the reaction L-histidinol phosphate + 2-oxoglutarate = 3-(imidazol-4-yl)-2-oxopropyl phosphate + L-glutamate. Its pathway is amino-acid biosynthesis; L-histidine biosynthesis; L-histidine from 5-phospho-alpha-D-ribose 1-diphosphate: step 7/9. The sequence is that of Histidinol-phosphate aminotransferase from Trichodesmium erythraeum (strain IMS101).